A 472-amino-acid polypeptide reads, in one-letter code: Uronate isomerase (472 aa).

The protein belongs to the metallo-dependent hydrolases superfamily. Uronate isomerase family.

It carries out the reaction D-glucuronate = D-fructuronate. It catalyses the reaction aldehydo-D-galacturonate = keto-D-tagaturonate. Its pathway is carbohydrate metabolism; pentose and glucuronate interconversion. In Oceanobacillus iheyensis (strain DSM 14371 / CIP 107618 / JCM 11309 / KCTC 3954 / HTE831), this protein is Uronate isomerase.